Here is a 456-residue protein sequence, read N- to C-terminus: UDP-glycosyltransferase 84B1 (456 aa).

UDP-alpha-D-glucose contacts are provided by residues Ser-278, 332–334 (SPQ), 349–357 (HCGWNSTME), and 371–374 (WTDQ).

Belongs to the UDP-glycosyltransferase family.

Possesses low quercetin 7-O-glucosyltransferase activity in vitro. The polypeptide is UDP-glycosyltransferase 84B1 (UGT84B1) (Arabidopsis thaliana (Mouse-ear cress)).